We begin with the raw amino-acid sequence, 210 residues long: Thiamine-phosphate synthase (210 aa).

4-amino-2-methyl-5-(diphosphooxymethyl)pyrimidine is bound by residues 36–40 (QLREK) and N68. Mg(2+)-binding residues include D69 and D88. S107 contributes to the 4-amino-2-methyl-5-(diphosphooxymethyl)pyrimidine binding site. 2-[(2R,5Z)-2-carboxy-4-methylthiazol-5(2H)-ylidene]ethyl phosphate is bound at residue 133 to 135 (TGS). K136 contacts 4-amino-2-methyl-5-(diphosphooxymethyl)pyrimidine. 2-[(2R,5Z)-2-carboxy-4-methylthiazol-5(2H)-ylidene]ethyl phosphate is bound by residues G164 and 184–185 (IS).

Belongs to the thiamine-phosphate synthase family. The cofactor is Mg(2+).

The enzyme catalyses 2-[(2R,5Z)-2-carboxy-4-methylthiazol-5(2H)-ylidene]ethyl phosphate + 4-amino-2-methyl-5-(diphosphooxymethyl)pyrimidine + 2 H(+) = thiamine phosphate + CO2 + diphosphate. It carries out the reaction 2-(2-carboxy-4-methylthiazol-5-yl)ethyl phosphate + 4-amino-2-methyl-5-(diphosphooxymethyl)pyrimidine + 2 H(+) = thiamine phosphate + CO2 + diphosphate. It catalyses the reaction 4-methyl-5-(2-phosphooxyethyl)-thiazole + 4-amino-2-methyl-5-(diphosphooxymethyl)pyrimidine + H(+) = thiamine phosphate + diphosphate. Its pathway is cofactor biosynthesis; thiamine diphosphate biosynthesis; thiamine phosphate from 4-amino-2-methyl-5-diphosphomethylpyrimidine and 4-methyl-5-(2-phosphoethyl)-thiazole: step 1/1. Functionally, condenses 4-methyl-5-(beta-hydroxyethyl)thiazole monophosphate (THZ-P) and 2-methyl-4-amino-5-hydroxymethyl pyrimidine pyrophosphate (HMP-PP) to form thiamine monophosphate (TMP). In Moorella thermoacetica (strain ATCC 39073 / JCM 9320), this protein is Thiamine-phosphate synthase.